The following is an 806-amino-acid chain: Acetyl-CoA decarbonylase/synthase complex subunit alpha 1 (806 aa).

[4Fe-4S] cluster contacts are provided by cysteine 73, cysteine 76, cysteine 77, cysteine 79, cysteine 84, and cysteine 94. Histidine 117 lines the CO pocket. [Ni-4Fe-4S] cluster contacts are provided by histidine 250, cysteine 278, and cysteine 323. 2 4Fe-4S ferredoxin-type domains span residues 406–436 (SDEQ…IPEA) and 445–475 (FSYL…LSVI). Cysteine 417, cysteine 420, cysteine 423, cysteine 427, cysteine 455, cysteine 458, cysteine 461, and cysteine 465 together coordinate [4Fe-4S] cluster. Residues cysteine 523, cysteine 552, and cysteine 587 each contribute to the [Ni-4Fe-4S] cluster site.

The protein belongs to the Ni-containing carbon monoxide dehydrogenase family. As to quaternary structure, heterotetramer of two alpha and two epsilon subunits. The ACDS complex is made up of alpha, epsilon, beta, gamma and delta subunits with a probable stoichiometry of (alpha(2)epsilon(2))(4)-beta(8)-(gamma(1)delta(1))(8). [4Fe-4S] cluster serves as cofactor. Requires [Ni-4Fe-4S] cluster as cofactor.

The enzyme catalyses CO + 2 oxidized [2Fe-2S]-[ferredoxin] + H2O = 2 reduced [2Fe-2S]-[ferredoxin] + CO2 + 2 H(+). It functions in the pathway one-carbon metabolism; methanogenesis from acetate. Functionally, part of the ACDS complex that catalyzes the reversible cleavage of acetyl-CoA, allowing growth on acetate as sole source of carbon and energy. The alpha-epsilon subcomponent functions as a carbon monoxide dehydrogenase. This chain is Acetyl-CoA decarbonylase/synthase complex subunit alpha 1, found in Methanosarcina mazei (strain ATCC BAA-159 / DSM 3647 / Goe1 / Go1 / JCM 11833 / OCM 88) (Methanosarcina frisia).